The chain runs to 1304 residues: Splicing factor 3B subunit 1 (1304 aa).

2 disordered regions span residues 100–119 (QYDP…EDEY) and 124–148 (RTMI…PKMN). Over residues 104-119 (FAEHRPPKIADREDEY) the composition is skewed to basic and acidic residues. Threonine 125 carries the post-translational modification Phosphothreonine. A Phosphoserine modification is found at serine 129. Lysine 141 bears the N6-acetyllysine mark. At threonine 142 the chain carries Phosphothreonine. Position 157 is a citrulline (arginine 157). The segment at 172 to 360 (LAEKAKAGEL…PVLTPGKTPI (189 aa)) is disordered. Phosphoserine is present on serine 194. Phosphothreonine occurs at positions 203, 207, and 211. N6-acetyllysine; alternate is present on lysine 214. Lysine 214 is covalently cross-linked (Glycyl lysine isopeptide (Lys-Gly) (interchain with G-Cter in SUMO2); alternate). Phosphothreonine occurs at positions 223 and 227. The interval 223–491 (TPGHTPSLRW…VDESTLSPEE (269 aa)) is interaction with PPP1R8. Phosphoserine is present on serine 229. Residues 231–241 (RWDETPGRAKG) are compositionally biased toward basic and acidic residues. Residues threonine 235, threonine 244, threonine 248, threonine 257, threonine 261, threonine 267, threonine 273, and threonine 278 each carry the phosphothreonine modification. Serine 287 is subject to Phosphoserine. Residues 291-304 (NRWDETPKTERDTP) are compositionally biased toward basic and acidic residues. Phosphothreonine occurs at positions 296, 299, 303, and 313. Serine 322 carries the post-translational modification Phosphoserine. Phosphothreonine is present on residues threonine 326 and threonine 328. Serine 332 carries the post-translational modification Phosphoserine. Position 341 is a phosphothreonine (threonine 341). Over residues 342–352 (PASQMGGSTPV) the composition is skewed to polar residues. Residues serine 344 and serine 349 each carry the phosphoserine modification. Residues threonine 350 and threonine 354 each carry the phosphothreonine modification. Position 400 is a phosphoserine (serine 400). Residue lysine 413 forms a Glycyl lysine isopeptide (Lys-Gly) (interchain with G-Cter in SUMO2); alternate linkage. Lysine 413 is covalently cross-linked (Glycyl lysine isopeptide (Lys-Gly) (interchain with G-Cter in SUMO1); alternate). Threonine 426 carries the post-translational modification Phosphothreonine. Lysine 430 is covalently cross-linked (Glycyl lysine isopeptide (Lys-Gly) (interchain with G-Cter in SUMO2)). Threonine 434 is subject to Phosphothreonine; by DYRK1A. Threonine 436 is modified (phosphothreonine). Serine 488 carries the post-translational modification Phosphoserine. 11 HEAT repeats span residues 529-568 (GPLF…DLVR), 569-603 (PYVH…LAKA), 604-641 (AGLA…ALGI), 643-677 (SLLP…LMGC), 680-718 (LPHL…AATP), 763-801 (NYYT…TDGV), 843-881 (KVGA…NLGA), 1010-1048 (TPPI…RGAE), 1052-1090 (AREW…AIGP), 1122-1160 (TCSP…YIGE), and 1163-1201 (KDYI…GVYG). Residues 547 to 550 (QERH) form an interaction with PHF5A region. 2 positions are modified to N6-acetyllysine: lysine 554 and lysine 562. An interaction with PHF5A region spans residues 1156 to 1157 (EY). Residues 1248 to 1304 (QYCLQGLFHPARKVRDVYWKIYNSIYIGSQDALIAHYPRIYNDDKNTYIRYDLDYIL) form an interaction with SF3B3 and SF3B5 region.

It belongs to the SF3B1 family. As to quaternary structure, component of the 17S U2 SnRNP complex, a ribonucleoprotein complex that contains small nuclear RNA (snRNA) U2 and a number of specific proteins. Part of the SF3B subcomplex of the 17S U2 SnRNP complex. SF3B associates with the splicing subcomplex SF3A and a 12S RNA unit to form the U2 small nuclear ribonucleoproteins complex (U2 snRNP). Within the SF3B complex, interacts directly (via HEAT domain) with SF3B3, SF3B5, SF3B6 and (via HEAT domain) with PHF5A. The SF3B subcomplex interacts with U2AF2. Identified in the spliceosome C complex. Component of the minor (U12-type spliceosome) spliceosome. Within the minor spliceosome complex, interacts with SCNM1 and CRIPT. Component of the B-WICH complex, at least composed of SMARCA5/SNF2H, BAZ1B/WSTF, SF3B1, DEK, MYO1C, ERCC6, MYBBP1A and DDX21. Phosphorylated form interacts with PPP1R8. Interacts with PQBP1. Interacts with RBM17. Interacts with RBM39. Interacts with SETX. Interacts with RBM15. Interacts with USH1G. Interacts with SDE2. Interacts with U2AF1. Interacts with CACTIN. Interacts with ZRSR1. Interacts with CYREN. Post-translationally, phosphorylated. Phosphorylation occurs concomitantly with the splicing catalytic steps. Phosphorylation on Thr-244, Thr-248 and Thr-313 by cyclin-dependent kinases promotes interaction with PPP1R8 during mitosis. In terms of processing, citrullinated by PADI4. Ubiquitous.

The protein localises to the nucleus. It localises to the nucleus speckle. Its function is as follows. Component of the 17S U2 SnRNP complex of the spliceosome, a large ribonucleoprotein complex that removes introns from transcribed pre-mRNAs. The 17S U2 SnRNP complex (1) directly participates in early spliceosome assembly and (2) mediates recognition of the intron branch site during pre-mRNA splicing by promoting the selection of the pre-mRNA branch-site adenosine, the nucleophile for the first step of splicing. Within the 17S U2 SnRNP complex, SF3B1 is part of the SF3B subcomplex, which is required for 'A' complex assembly formed by the stable binding of U2 snRNP to the branchpoint sequence in pre-mRNA. Sequence independent binding of SF3A and SF3B subcomplexes upstream of the branch site is essential, it may anchor U2 snRNP to the pre-mRNA. May also be involved in the assembly of the 'E' complex. Also acts as a component of the minor spliceosome, which is involved in the splicing of U12-type introns in pre-mRNAs. Together with other U2 snRNP complex components may also play a role in the selective processing of microRNAs (miRNAs) from the long primary miRNA transcript, pri-miR-17-92. This chain is Splicing factor 3B subunit 1, found in Mus musculus (Mouse).